A 359-amino-acid polypeptide reads, in one-letter code: D-alanine--D-alanine ligase (359 aa).

The ATP-grasp domain maps to 141–346 (KRIFKEAGLP…YSTLLDELIN (206 aa)). 172–227 (IEHLGYPCFVKPANLGSSVGITKVHNEEELPGALKLAAKYDRKLLIERGIDAREIE) lines the ATP pocket. Mg(2+) is bound by residues aspartate 299, glutamate 313, and asparagine 315.

This sequence belongs to the D-alanine--D-alanine ligase family. Requires Mg(2+) as cofactor. It depends on Mn(2+) as a cofactor.

It is found in the cytoplasm. It carries out the reaction 2 D-alanine + ATP = D-alanyl-D-alanine + ADP + phosphate + H(+). It participates in cell wall biogenesis; peptidoglycan biosynthesis. Its function is as follows. Cell wall formation. The protein is D-alanine--D-alanine ligase of Thermoanaerobacter pseudethanolicus (strain ATCC 33223 / 39E) (Clostridium thermohydrosulfuricum).